Here is a 184-residue protein sequence, read N- to C-terminus: dCTP deaminase (184 aa).

DCTP contacts are provided by residues 107-112, 131-133, Q152, Y166, and Q176; these read KSTYAR and TLE. E133 (proton donor/acceptor) is an active-site residue.

The protein belongs to the dCTP deaminase family. As to quaternary structure, homotrimer.

The enzyme catalyses dCTP + H2O + H(+) = dUTP + NH4(+). The protein operates within pyrimidine metabolism; dUMP biosynthesis; dUMP from dCTP (dUTP route): step 1/2. In terms of biological role, catalyzes the deamination of dCTP to dUTP. This chain is dCTP deaminase, found in Novosphingobium aromaticivorans (strain ATCC 700278 / DSM 12444 / CCUG 56034 / CIP 105152 / NBRC 16084 / F199).